The chain runs to 100 residues: MAKKSMIEREKKRIKLNNKYTPKRNTLLQAYRQTEDFQSRLDIHSKIQKLPRNSAKNRIRNRCWKTGRPRGFYRDFGVSRHVLREMAHSCLLPGVTKSSW.

Belongs to the universal ribosomal protein uS14 family. Part of the 30S ribosomal subunit.

It localises to the plastid. The protein resides in the chloroplast. Binds 16S rRNA, required for the assembly of 30S particles. This Trieres chinensis (Marine centric diatom) protein is Small ribosomal subunit protein uS14c.